The chain runs to 327 residues: Complex I intermediate-associated protein 30, mitochondrial (327 aa).

The N-terminal 24 residues, 1 to 24 (MALVHKLLRDTYILRKFSKPTSAL), are a transit peptide targeting the mitochondrion. A disordered region spans residues 42 to 63 (PVASPGKASSQRKTEGDLQGDH). Positions 53 to 63 (RKTEGDLQGDH) are enriched in basic and acidic residues. Ser-318 is modified (phosphoserine).

The protein belongs to the CIA30 family. In terms of assembly, part of the mitochondrial complex I assembly/MCIA complex that comprises at least the core subunits TMEM126B, NDUFAF1, ECSIT and ACAD9 and complement subunits such as COA1 and TMEM186. Interacts with ECSIT. Interacts with ACAD9. At early stages of complex I assembly, it is found in intermediate subcomplexes that contain different subunits including NDUFB6, NDUFA6, NDUFA9, NDUFS3, NDUFS7, ND1, ND2 and ND3. Interacts with TMEM70 and TMEM242.

Its subcellular location is the mitochondrion. It localises to the mitochondrion matrix. As part of the MCIA complex, involved in the assembly of the mitochondrial complex I. The sequence is that of Complex I intermediate-associated protein 30, mitochondrial from Gorilla gorilla gorilla (Western lowland gorilla).